Reading from the N-terminus, the 432-residue chain is Elongation factor 1-gamma (432 aa).

The GST N-terminal domain occupies Leu-1 to Ser-82. The GST C-terminal domain occupies Thr-83 to Phe-211. Lys-142 and Lys-207 each carry N6-acetyllysine. A compositionally biased stretch (basic and acidic residues) spans Phe-216–Ala-249. Positions Phe-216–Leu-258 are disordered. Lys-248 is covalently cross-linked (Glycyl lysine isopeptide (Lys-Gly) (interchain with G-Cter in SUMO1)). The 162-residue stretch at Ala-271–Lys-432 folds into the EF-1-gamma C-terminal domain. A Glycyl lysine isopeptide (Lys-Gly) (interchain with G-Cter in SUMO2) cross-link involves residue Lys-280. The residue at position 396 (Lys-396) is an N6-acetyllysine. Position 429 is an N6-acetyllysine; alternate (Lys-429). Lys-429 is modified (N6-malonyllysine; alternate).

EF-1 is composed of four subunits: alpha, beta, delta, and gamma.

In terms of biological role, probably plays a role in anchoring the complex to other cellular components. The sequence is that of Elongation factor 1-gamma (EEF1G) from Sus scrofa (Pig).